A 672-amino-acid chain; its full sequence is MKKNEKANISASYNDLIATICNPRISDVGTYRIESVVGEGSFGKVYLAAHLLTNTKVVLKSSCRKQAIILAREIHHHRRLLHPNITRLYEVVCTEDRIYLAMEYCPNGELYDWVAREKRLDEKTTCRIMWQLCCAIQYLHRQGCVHRDLKLENIFLDKAYNVKLGDFGFSRDSDCSRRTFMNTRCGTVAYCAPELVQGHKYIGECVDIWSLGIIMYALLIGRLPFDEDDVSLTEQKIINECPQYPETLSKNSSSLLKSLLCKDYRLRPSIDQIISHPYFKENGYHSSSIRDPRPSSKAEEKVRKRLEFVGVDMDQLNASISQQRCDMFYGWWLLLLEKEMRKENKKKKGLFHLHKGSSSAVHIAPATPSLKTAQVSVMSNNQDSLKSRHTSSDSSNSLLSTFRSWLFDPKQKHTADTLSSSAIRPRTPSPSAENYLTQENFDSDNLSESLDNSVENLTVFPSINSFGRRHSNLPQTTHVDTGEQNTPFTPPLLKTVNLDGNKDFTFPSNSQNSPSKSSNLSINIDIPPSPLQNTVISPQPTRRSRTPIRSLSGRSSVASSRNSSRTRSYSNVSSASSNSLISIISSKPSSSTVQRQTPFHSPFERLHKSFHFPSGEPFNTRINATAIFTVGSGRKNPQSSSSLMFNQSSVKEEEEPEETSFSDSSKHFTDLL.

One can recognise a Protein kinase domain in the interval 31 to 279; the sequence is YRIESVVGEG…IDQIISHPYF (249 aa). Residues 37 to 45 and lysine 60 contribute to the ATP site; that span reads VGEGSFGKV. Catalysis depends on aspartate 148, which acts as the Proton acceptor. Position 231 is a phosphoserine (serine 231). The segment covering 375 to 384 has biased composition (polar residues); it reads VSVMSNNQDS. 4 disordered regions span residues 375-396, 416-436, 464-572, and 632-672; these read VSVM…DSSN, DTLS…ENYL, NSFG…YSNV, and SGRK…TDLL. Positions 472 to 487 are enriched in polar residues; it reads NLPQTTHVDTGEQNTP. Low complexity predominate over residues 508–523; sequence SNSQNSPSKSSNLSIN. Over residues 531–541 the composition is skewed to polar residues; sequence LQNTVISPQPT. Low complexity-rich tracts occupy residues 549-572 and 639-649; these read RSLS…YSNV and SSSSLMFNQSS.

It belongs to the protein kinase superfamily. Ser/Thr protein kinase family.

Its subcellular location is the cytoplasm. The catalysed reaction is L-seryl-[protein] + ATP = O-phospho-L-seryl-[protein] + ADP + H(+). It carries out the reaction L-threonyl-[protein] + ATP = O-phospho-L-threonyl-[protein] + ADP + H(+). In terms of biological role, has a role in meiosis. This Schizosaccharomyces pombe (strain 972 / ATCC 24843) (Fission yeast) protein is Serine/threonine-protein kinase ppk16 (ppk16).